A 336-amino-acid polypeptide reads, in one-letter code: Antigen-presenting glycoprotein CD1d1 (336 aa).

Residues 1–21 (MRYLPWLLLWAFLQVWGQSEA) form the signal peptide. At 22 to 305 (QQKNYTFRCL…YWDARQAPVG (284 aa)) the chain is on the extracellular side. Asn25, Asn38, and Asn60 each carry an N-linked (GlcNAc...) asparagine glycan. An a D-galactosylceramide-binding site is contributed by Asp98. 2 disulfide bridges follow: Cys122–Cys186 and Cys226–Cys281. A glycan (N-linked (GlcNAc...) asparagine) is linked at Asn128. Position 171-174 (171-174 (DQGT)) interacts with a D-galactosylceramide. N-linked (GlcNAc...) asparagine glycosylation is present at Asn183. The Ig-like domain occupies 207–297 (PVAWLSSVPS…LGGQDIILYW (91 aa)). The helical transmembrane segment at 306-326 (LIVFIVLIMLVVVGAVVYYIW) threads the bilayer. Over 327–336 (RRRSAYQDIR) the chain is Cytoplasmic. Residues 332–335 (YQDI) carry the Internalization signal motif.

As to quaternary structure, heterodimer with B2M (beta-2-microglobulin). Interacts with MHC II and CD74. Post-translationally, N-glycosylated. Expressed on cortical thymocytes, on certain T-cell leukemias, and in various other tissues.

It is found in the cell membrane. Its subcellular location is the endosome membrane. It localises to the lysosome membrane. Its function is as follows. Antigen-presenting protein that binds self and non-self glycolipids and presents them to T-cell receptors on natural killer T-cells. The sequence is that of Antigen-presenting glycoprotein CD1d1 (Cd1d1) from Mus musculus (Mouse).